A 152-amino-acid polypeptide reads, in one-letter code: SUZ RNA-binding domain-containing (152 aa).

Met1 carries the post-translational modification N-acetylmethionine. The tract at residues 30–152 (TQKESRKSKS…DGSQGFKQRR (123 aa)) is disordered. 3 positions are modified to phosphoserine: Ser37, Ser39, and Ser51. Positions 42–107 (KVPIVIQDDS…ARKRILGSAS (66 aa)) constitute an SUZ domain. Over residues 66–81 (PTSNGVVSSPNSTSRP) the composition is skewed to polar residues. Residues 89 to 100 (AQREAEYAEARK) are compositionally biased toward basic and acidic residues. Phosphoserine occurs at positions 105 and 107. Residues 111 to 152 (EQEKPILDRPTRISQPEDSRQPNNVIRQPLGPDGSQGFKQRR) form the SUZ-C domain. The segment covering 113–130 (EKPILDRPTRISQPEDSR) has biased composition (basic and acidic residues).

Belongs to the SZRD1 family.

The chain is SUZ RNA-binding domain-containing (SZRD1) from Homo sapiens (Human).